Consider the following 80-residue polypeptide: DNA-directed RNA polymerase RPB10 homolog (80 aa).

The Zn(2+) site is built by Cys-7, Cys-10, Cys-65, and Cys-66.

The protein belongs to the archaeal RpoN/eukaryotic RPB10 RNA polymerase subunit family. Part of the viral DNA-directed RNA polymerase that consists of 8 polII-like subunits (RPB1, RPB2, RPB3, RPB5, RPB6, RPB7, RPB9, RPB10), a capping enzyme and a termination factor.

The protein resides in the host cytoplasm. Component of the DNA-directed RNA polymerase (RNAP) that catalyzes the transcription in the cytoplasm of viral DNA into RNA using the four ribonucleoside triphosphates as substrates. The sequence is that of DNA-directed RNA polymerase RPB10 homolog from African swine fever virus (strain Badajoz 1971 Vero-adapted) (Ba71V).